Consider the following 558-residue polypeptide: Transcription factor RelB (558 aa).

A compositionally biased stretch (basic and acidic residues) spans 1-11; that stretch reads MPSRRAARESA. The interval 1–21 is disordered; sequence MPSRRAARESAPELGALGSSD. A Phosphoserine modification is found at Ser19. The tract at residues 22-50 is leucine-zipper; sequence LSSLSLTVSRTTDELEIIDEYIKENGFGL. At Thr84 the chain carries Phosphothreonine. Residues 103 to 418 enclose the RHD domain; the sequence is PYLVITEQPK…ESKRRKKKPV (316 aa). 2 consecutive short sequence motifs (nuclear localization signal) follow at residues 387–391 and 411–416; these read KKRKR and KRRKKK. Residue Ser552 is modified to Phosphoserine.

In terms of assembly, component of the NF-kappa-B RelB-p50 complex. Component of the NF-kappa-B RelB-p52 complex. Self-associates; the interaction seems to be transient and may prevent degradation allowing for heterodimer formation p50 or p52. Interacts with NFKB1/p50, NFKB2/p52 and NFKB2/p100. Interacts with NFKBID. Interacts with BMAL1 and the interaction is enhanced in the presence of CLOCK. In terms of processing, phosphorylation at 'Thr-103' and 'Ser-573' is followed by proteasomal degradation. In terms of tissue distribution, expressed in intestine, thymus and spleen. Undetectable in liver, bome marrow, kidney and testis.

The protein resides in the nucleus. Its subcellular location is the cytoplasm. The protein localises to the cytoskeleton. It is found in the microtubule organizing center. It localises to the centrosome. In terms of biological role, NF-kappa-B is a pleiotropic transcription factor which is present in almost all cell types and is involved in many biological processed such as inflammation, immunity, differentiation, cell growth, tumorigenesis and apoptosis. NF-kappa-B is a homo- or heterodimeric complex formed by the Rel-like domain-containing proteins RELA/p65, RELB, NFKB1/p105, NFKB1/p50, REL and NFKB2/p52. The dimers bind at kappa-B sites in the DNA of their target genes and the individual dimers have distinct preferences for different kappa-B sites that they can bind with distinguishable affinity and specificity. Different dimer combinations act as transcriptional activators or repressors, respectively. NF-kappa-B is controlled by various mechanisms of post-translational modification and subcellular compartmentalization as well as by interactions with other cofactors or corepressors. NF-kappa-B complexes are held in the cytoplasm in an inactive state complexed with members of the NF-kappa-B inhibitor (I-kappa-B) family. In a conventional activation pathway, I-kappa-B is phosphorylated by I-kappa-B kinases (IKKs) in response to different activators, subsequently degraded thus liberating the active NF-kappa-B complex which translocates to the nucleus. NF-kappa-B heterodimeric RelB-p50 and RelB-p52 complexes are transcriptional activators. RELB neither associates with DNA nor with RELA/p65 or REL. Stimulates promoter activity in the presence of NFKB2/p49. As a member of the NUPR1/RELB/IER3 survival pathway, may allow the development of pancreatic intraepithelial neoplasias. Regulates the circadian clock by repressing the transcriptional activator activity of the CLOCK-BMAL1 heterodimer in a CRY1/CRY2 independent manner. Increased repression of the heterodimer is seen in the presence of NFKB2/p52. Is required for both T and B lymphocyte maturation and function. This Mus musculus (Mouse) protein is Transcription factor RelB (Relb).